The sequence spans 1546 residues: MKDFNKVRIAIASPEKIREWSFGEVEKPETINYRTLKPEREGLFDERIFGPIKDYECACGKYKRQRYEGKVCERCGVEVTSSKVRRYRMGHIDLATPAAHIWYVKDSPSKIGTLLDLSAGQLEKVLYFSSFIVTKPFNAQKDGRPLKRGELLSDDEYRELRFGRQETYTIPNSVEDVEIRDGEYVTRGQILGGNVVSKMDGLAQYRFPRRAVIAYSEGVEASLPLPADTLVEQETFRAGEILAELEQDVQITAPVAGTVFMHDLGEDSVMIELREGVEANDSDEEEAADPIRGEVLARVYVPHGMNVQVAEGEVIEAGALLADASEGARLRVSRDSNLSGVTFPKKKGDVTVTAHWTRRVEYPIDPTMHVLVGDGSEVTKGQRVIGAIDKEEEVIAEADGVITLHQPASILVSKAKVYAYDDEPLVVNGDRVEPGDELADDGNLRSEISGRIELDLVRKQVRVIESYDFEAKMGAEAVKELLDELNLDELETELNEQMKDNSRHKRAKARKRLEVTRSFKASGNNPSWMILGTVPVMPPDLRPMVQVDGGRFATSDLNDLYRRLINRNNRLKKLMSQGAPDMIIRNEKRMLQEAVDALIDNGRRGSPVTNPGSDRSLRSLTDLLGGKQGRFRQNLLGKRVDYSGRSVIVVGPQLKLHQCGVPKRMALELFKPFLFKVLEEKGEVTNIKQARKMLERYRDTRDSVWDALEEVIEDKVVLLNRAPTLHRLGIQAFEPVLVEGQSIQLHPLVCEAFNADFDGDQMAIHVPLSAQAQAEARIQMLASHNLLSPANGEPNVKPSRDIILGIFTLTQLRRDNLGAGTEYASEADALAAFDEGKLSLNSPVMVNGVETSPGRLRYTFSNPDEALHAVEQGEIDHQDHVRIRLNGQVYETSAGRVQFRRMVQEALGAQGGLIDTLVDLETTYEKDALKDMVMACFKHLGIEATAGLLDGLKEGGFKLSTTSGITIGIDDIVLPPNKGELLAEADQMLAEIEQNFEFGFMTEEERYKQVVQLWNNTTDAVKDAVFENFSKNYPFNPLWIMSQSGARGNPQQIRQLAGMRGLMARPDGSTIEVPIRASFREGLTVLEYFISTHGARKGGADTALRTADSGYLTRKLVDVAHEVVVRDVDCGSTDSTVMPLGATDERTGEWRSRKGSEIETSIYGRTLTADVEFSDGRVIPEGEMLSMEDVKAIAKDAKHIGEVFVRTPLNCRVKAGVCQKCYGYDLSQAKPVSMGEAVGVVAAESIGEPGTQLTMRTFHTGGIAGGGDITMGLPRVIELFEARKPKTQAVVADRDGVIRIEEEEERYLVRIEADDEQYSSKTATKVPRVLRMTVKDGERVEAGQPITRGAVNPHDLLMYKDTDAAQRYLVEEVQRVYRSQGVKVHDKHIEVIVRQMLRWVEVTDGGDTTLLEGQTVEHWEVDQANEALAEGQTPASWKPVLLGITKSSLTTKSWLSAASFQHTTHVLTEASMRGQVDDLIGLKENVILGKLIPAGTGLLTVREMQVADDRTLEKYGEGSTSSDAVTGGQRYDDTRPGSSINPGYGD.

Residues cysteine 57, cysteine 59, cysteine 72, and cysteine 75 each contribute to the Zn(2+) site. Mg(2+) is bound by residues aspartate 756, aspartate 758, and aspartate 760. The Zn(2+) site is built by cysteine 1130, cysteine 1211, cysteine 1218, and cysteine 1221. A disordered region spans residues 1512-1546; the sequence is LEKYGEGSTSSDAVTGGQRYDDTRPGSSINPGYGD. A compositionally biased stretch (polar residues) spans 1536 to 1546; sequence PGSSINPGYGD.

It belongs to the RNA polymerase beta' chain family. As to quaternary structure, the RNAP catalytic core consists of 2 alpha, 1 beta, 1 beta' and 1 omega subunit. When a sigma factor is associated with the core the holoenzyme is formed, which can initiate transcription. The cofactor is Mg(2+). Zn(2+) serves as cofactor.

The enzyme catalyses RNA(n) + a ribonucleoside 5'-triphosphate = RNA(n+1) + diphosphate. Its function is as follows. DNA-dependent RNA polymerase catalyzes the transcription of DNA into RNA using the four ribonucleoside triphosphates as substrates. In Deinococcus radiodurans (strain ATCC 13939 / DSM 20539 / JCM 16871 / CCUG 27074 / LMG 4051 / NBRC 15346 / NCIMB 9279 / VKM B-1422 / R1), this protein is DNA-directed RNA polymerase subunit beta'.